Reading from the N-terminus, the 152-residue chain is Ubiquitin-conjugating enzyme E2 1 (152 aa).

In terms of domain architecture, UBC core spans 4–150 (PARKRLMRDF…VRDVVEQSWT (147 aa)). Catalysis depends on C88, which acts as the Glycyl thioester intermediate. The disordered stretch occupies residues 119 to 152 (NSPANSEAARMYSESKREYNRRVRDVVEQSWTAD). Over residues 131–145 (SESKREYNRRVRDVV) the composition is skewed to basic and acidic residues.

The protein belongs to the ubiquitin-conjugating enzyme family. In terms of tissue distribution, ubiquitously expressed.

The catalysed reaction is S-ubiquitinyl-[E1 ubiquitin-activating enzyme]-L-cysteine + [E2 ubiquitin-conjugating enzyme]-L-cysteine = [E1 ubiquitin-activating enzyme]-L-cysteine + S-ubiquitinyl-[E2 ubiquitin-conjugating enzyme]-L-cysteine.. It functions in the pathway protein modification; protein ubiquitination. Accepts the ubiquitin from the E1 complex and catalyzes its covalent attachment to other proteins. The chain is Ubiquitin-conjugating enzyme E2 1 (UBC1) from Arabidopsis thaliana (Mouse-ear cress).